Reading from the N-terminus, the 290-residue chain is MASSDILSVARTDDGSVCEVSLRGGRKKTTVYLPDTEPWVVETDAIKDAFLSDGIVDMARKLHRGALPSNSHNGLRMVLFCYCYLQNCVYLALFLCPLNPYLVTPSSIEFAEPVVAPEVLFPHPAEMSRGCDDAIFCKLPYTVPIINTTFGRIYPNSTREPDGRPTDYSMALRRAFAVMVNTSCAGVTLCRGETQTASRNHTEWENLLAMFSVIIYALDHNCHPEALSIASGIFDERDYGLFISQPRSVPSPTPCDVSWEDIYNGTYLARPGNCDPWPNLSTPPLILNFK.

The polypeptide is Protein ORF27 (ORF27) (Human herpesvirus 8 type P (isolate GK18) (HHV-8)).